We begin with the raw amino-acid sequence, 95 residues long: Signal recognition particle 19 kDa protein (95 aa).

It belongs to the SRP19 family. In terms of assembly, part of the signal recognition particle protein translocation system, which is composed of SRP and FtsY. Archaeal SRP consists of a 7S RNA molecule of 300 nucleotides and two protein subunits: SRP54 and SRP19.

It localises to the cytoplasm. Involved in targeting and insertion of nascent membrane proteins into the cytoplasmic membrane. Binds directly to 7S RNA and mediates binding of the 54 kDa subunit of the SRP. This Pyrobaculum islandicum (strain DSM 4184 / JCM 9189 / GEO3) protein is Signal recognition particle 19 kDa protein.